The primary structure comprises 611 residues: Histone acetyltransferase KAT7 (611 aa).

Residues 1-173 are disordered; the sequence is MPRRKRNAGS…SDLSHRPKRR (173 aa). Phosphoserine is present on serine 10. The span at 42 to 57 shows a compositional bias: low complexity; sequence VTRSSARLSQSSQDSS. Residues serine 50 and serine 53 each carry the phosphoserine; by ATR modification. Serine 57 carries the phosphoserine; by PLK1 modification. A Phosphoserine modification is found at serine 64. Phosphothreonine; by CDK1 is present on residues threonine 85 and threonine 88. The segment covering 96 to 105 has biased composition (polar residues); that stretch reads QTRSSGSETE. Serine 102 carries the post-translational modification Phosphoserine. Threonine 104 carries the post-translational modification Phosphothreonine. Residues 110-125 show a composition bias toward basic and acidic residues; the sequence is FSDRETKNTADHDESP. A phosphoserine mark is found at serine 111 and serine 124. Threonine 128 is subject to Phosphothreonine. Over residues 134–145 the composition is skewed to low complexity; it reads PSSESDIDISSP. Over residues 148-168 the composition is skewed to basic and acidic residues; sequence SHDESIAKDMSLKDSGSDLSH. Residues serine 158, serine 162, serine 164, and serine 178 each carry the phosphoserine modification. The segment at 176 to 219 adopts a CCHHC-type zinc-finger fold; sequence HESYNFNMKCPTPGCNSLGHLTGKHERHFSISGCPLYHNLSADE. Lysine 199 and lysine 277 each carry N6-acetyllysine. A Glycyl lysine isopeptide (Lys-Gly) (interchain with G-Cter in SUMO2) cross-link involves residue lysine 323. Positions 332–607 constitute an MYST-type HAT domain; that stretch reads EGSNMIKTIA…MDPSCLKWTP (276 aa). Lysine 338 participates in a covalent cross-link: Glycyl lysine isopeptide (Lys-Gly) (interchain with G-Cter in ubiquitin). A C2HC MYST-type zinc finger spans residues 365–390; that stretch reads LYMCEFCLKYMKSQTILRRHMAKCVW. 4 residues coordinate Zn(2+): cysteine 368, cysteine 371, histidine 384, and cysteine 388. Residue lysine 432 is modified to N6-acetyllysine; by autocatalysis. Residues 475 to 477 and 483 to 488 contribute to the acetyl-CoA site; these read ILT and RQGYGK. Position 506 is a phosphoserine (serine 506). Residue glutamate 508 is the Proton donor/acceptor of the active site. Acetyl-CoA contacts are provided by serine 512 and serine 521.

The protein belongs to the MYST (SAS/MOZ) family. Component of the HBO1 complex composed of KAT7/HBO1, MEAF6, ING4 or ING5, and one scaffold subunit: complexes containing BRPF scaffold (BRPF1, BRD1/BRPF2 or BRPF3) direct KAT7/HBO1 specificity towards H3K14ac, while complexes containing JADE scaffold (JADE1, JADE2 and JADE3) mediate acetylation of histone H4. Interacts with MCM2 and ORC1. Interacts with the androgen receptor (AR); in the presence of dihydrotestosterone. Interacts with CDT1. Interacts with MAP2K1 and CUL1. Interacts with p53/TP53; leading to inhibit histone acetyltransferase activity. Interacts with MIS18BP1. In terms of processing, phosphorylated at Ser-50 and Ser-53 by ATR in response to DNA damage, promoting its ubiquitination by the CRL4(DDB2) complex and subsequent degradation. Phosphorylation at Ser-50 and Ser-53 by ATR in response to ultraviolet-induced DNA, promotes localization to DNA damage sites. Phosphorylation at Ser-57 by PLK1 during mitosis seems important for prereplicative complex formation and DNA replication licensing, and requires prior phosphorylation at Thr-85 and Thr-88 by CDK1. Phosphorylated by MAP2K1, which accelerates its degradation. Ubiquitinated at Lys-338, leading to proteasomal degradation. Ubiquitinated by the CRL4(DDB2) complex following phosphorylation by ATR, leading to its subsequent degradation. Post-translationally, autoacetylation at Lys-432 is required for proper function. As to expression, ubiquitously expressed, with highest levels in testis.

The protein resides in the nucleus. It localises to the chromosome. It is found in the centromere. Its subcellular location is the cytoplasm. The protein localises to the cytosol. It catalyses the reaction L-lysyl-[histone] + acetyl-CoA = N(6)-acetyl-L-lysyl-[histone] + CoA + H(+). Its activity is regulated as follows. Histone acetyltransferase activity is inhibited by GMNN in the context of a complex with CDT1, inhibiting histone H4 acetylation and DNA replication licensing. Selectively inhibited by WM-3835 (N'-(4-fluoro-5-methyl-[1,1'-biphenyl]-3-carbonyl)-3- hydroxybenzenesulfonohydrazide) inhibitor. Catalytic subunit of histone acetyltransferase HBO1 complexes, which specifically mediate acetylation of histone H3 at 'Lys-14' (H3K14ac), thereby regulating various processes, such as gene transcription, protein ubiquitination, immune regulation, stem cell pluripotent and self-renewal maintenance and embryonic development. Some complexes also catalyze acetylation of histone H4 at 'Lys-5', 'Lys-8' and 'Lys-12' (H4K5ac, H4K8ac and H4K12ac, respectively), regulating DNA replication initiation, regulating DNA replication initiation. Specificity of the HBO1 complexes is determined by the scaffold subunit: complexes containing BRPF scaffold (BRPF1, BRD1/BRPF2 or BRPF3) direct KAT7/HBO1 specificity towards H3K14ac, while complexes containing JADE (JADE1, JADE2 and JADE3) scaffold direct KAT7/HBO1 specificity towards histone H4. H3K14ac promotes transcriptional elongation by facilitating the processivity of RNA polymerase II. Acts as a key regulator of hematopoiesis by forming a complex with BRD1/BRPF2, directing KAT7/HBO1 specificity towards H3K14ac and promoting erythroid differentiation. H3K14ac is also required for T-cell development. KAT7/HBO1-mediated acetylation facilitates two consecutive steps, licensing and activation, in DNA replication initiation: H3K14ac facilitates the activation of replication origins, and histone H4 acetylation (H4K5ac, H4K8ac and H4K12ac) facilitates chromatin loading of MCM complexes, promoting DNA replication licensing. Acts as a positive regulator of centromeric CENPA assembly: recruited to centromeres and mediates histone acetylation, thereby preventing centromere inactivation mediated by SUV39H1, possibly by increasing histone turnover/exchange. Involved in nucleotide excision repair: phosphorylation by ATR in response to ultraviolet irradiation promotes its localization to DNA damage sites, where it mediates histone acetylation to facilitate recruitment of XPC at the damaged DNA sites. Acts as an inhibitor of NF-kappa-B independently of its histone acetyltransferase activity. In terms of biological role, plays a central role in the maintenance of leukemia stem cells in acute myeloid leukemia (AML). Acts by mediating acetylation of histone H3 at 'Lys-14' (H3K14ac), thereby facilitating the processivity of RNA polymerase II to maintain the high expression of key genes, such as HOXA9 and HOXA10 that help to sustain the functional properties of leukemia stem cells. The protein is Histone acetyltransferase KAT7 of Homo sapiens (Human).